The chain runs to 455 residues: D-inositol 3-phosphate glycosyltransferase (455 aa).

Residues 1–25 are disordered; sequence MSQHVSRLGGLRGRSHGHGAFGGPY. His-45 contributes to the 1D-myo-inositol 3-phosphate binding site. Residues 51-52 and Gly-59 contribute to the UDP-N-acetyl-alpha-D-glucosamine site; that span reads QP. 1D-myo-inositol 3-phosphate-binding positions include 56 to 61, Lys-114, Tyr-147, Thr-171, and Arg-191; that span reads DAGGMN. UDP-N-acetyl-alpha-D-glucosamine contacts are provided by Arg-266 and Lys-271. Mg(2+) is bound by residues Tyr-341, Arg-342, and Ala-344. 2 residues coordinate UDP-N-acetyl-alpha-D-glucosamine: Glu-354 and Glu-362. Thr-368 contributes to the Mg(2+) binding site.

It belongs to the glycosyltransferase group 1 family. MshA subfamily. As to quaternary structure, homodimer.

It catalyses the reaction 1D-myo-inositol 3-phosphate + UDP-N-acetyl-alpha-D-glucosamine = 1D-myo-inositol 2-acetamido-2-deoxy-alpha-D-glucopyranoside 3-phosphate + UDP + H(+). Catalyzes the transfer of a N-acetyl-glucosamine moiety to 1D-myo-inositol 3-phosphate to produce 1D-myo-inositol 2-acetamido-2-deoxy-glucopyranoside 3-phosphate in the mycothiol biosynthesis pathway. In Streptomyces bingchenggensis (strain BCW-1), this protein is D-inositol 3-phosphate glycosyltransferase.